A 196-amino-acid chain; its full sequence is Dephospho-CoA kinase (196 aa).

One can recognise a DPCK domain in the interval 5–196 (IIGLTGGIAT…QVDIALNFEL (192 aa)). An ATP-binding site is contributed by 13 to 18 (ATGKTT).

It belongs to the CoaE family.

It localises to the cytoplasm. It carries out the reaction 3'-dephospho-CoA + ATP = ADP + CoA + H(+). It participates in cofactor biosynthesis; coenzyme A biosynthesis; CoA from (R)-pantothenate: step 5/5. Its function is as follows. Catalyzes the phosphorylation of the 3'-hydroxyl group of dephosphocoenzyme A to form coenzyme A. This is Dephospho-CoA kinase from Trichormus variabilis (strain ATCC 29413 / PCC 7937) (Anabaena variabilis).